A 229-amino-acid chain; its full sequence is Molybdenum transport system permease protein ModB (229 aa).

Over 1 to 16 (MILTDPEWQAVLLSLK) the chain is Periplasmic. Residues 11 to 219 (VLLSLKVSSL…MISLLISEWL (209 aa)) enclose the ABC transmembrane type-1 domain. A helical transmembrane segment spans residues 17–37 (VSSLAVLFSLPFGIFFAWLLV). The Cytoplasmic portion of the chain corresponds to 38-49 (RCTFPGKALLDS). A helical transmembrane segment spans residues 50–70 (VLHLPLVLPPVVVGYLLLVSM). Over 71–83 (GRRGFIGERLYDW) the chain is Periplasmic. A helical membrane pass occupies residues 84 to 104 (FGITFAFSWRGAVLAAAVMSF). Over 105–136 (PLMVRAIRLALEGVDVKLEQAARTLGAGRWRV) the chain is Cytoplasmic. The helical transmembrane segment at 137–157 (FFTITLPLTLPGIIVGTVLAF) threads the bilayer. The Periplasmic segment spans residues 158–201 (ARSLGEFGATITFVSNIPGETRTIPSAMYTLIQTPGGESGAARL). Residues 202–222 (CIISIALAMISLLISEWLARI) traverse the membrane as a helical segment. Residues 223–229 (SRERAGR) are Cytoplasmic-facing.

The protein belongs to the binding-protein-dependent transport system permease family. CysTW subfamily.

It is found in the cell inner membrane. Functionally, part of the binding-protein-dependent transport system for molybdenum; probably responsible for the translocation of the substrate across the membrane. The sequence is that of Molybdenum transport system permease protein ModB (modB) from Escherichia coli O157:H7.